A 759-amino-acid chain; its full sequence is LPS-assembly protein LptD (759 aa).

Residues 1-22 (MPLPIPRLLIPALLLASGASLA) form the signal peptide.

It belongs to the LptD family. Component of the lipopolysaccharide transport and assembly complex. Interacts with LptE and LptA.

The protein localises to the cell outer membrane. In terms of biological role, together with LptE, is involved in the assembly of lipopolysaccharide (LPS) at the surface of the outer membrane. This is LPS-assembly protein LptD from Alcanivorax borkumensis (strain ATCC 700651 / DSM 11573 / NCIMB 13689 / SK2).